The following is an 83-amino-acid chain: U20-theraphotoxin-Cg1a 2 (83 aa).

A signal peptide spans 1 to 21; sequence MQVSVLITLAVLGVMFVWTSA. The propeptide occupies 22 to 47; that stretch reads AELEERGSDQPAWLKSLERIFQSEER. Intrachain disulfides connect Cys49/Cys63, Cys56/Cys68, and Cys62/Cys76.

This sequence belongs to the neurotoxin 10 (Hwtx-1) family. 40 (Jztx-35) subfamily. Expressed by the venom gland.

It localises to the secreted. In terms of biological role, probable ion channel inhibitor. This chain is U20-theraphotoxin-Cg1a 2, found in Chilobrachys guangxiensis (Chinese earth tiger tarantula).